The primary structure comprises 54 residues: Small ribosomal subunit protein uS14 (54 aa).

Zn(2+) is bound by residues Cys19, Cys22, Cys37, and Cys40.

This sequence belongs to the universal ribosomal protein uS14 family. Zinc-binding uS14 subfamily. Part of the 30S ribosomal subunit. It depends on Zn(2+) as a cofactor.

In terms of biological role, binds 16S rRNA, required for the assembly of 30S particles. The chain is Small ribosomal subunit protein uS14 from Pyrobaculum aerophilum (strain ATCC 51768 / DSM 7523 / JCM 9630 / CIP 104966 / NBRC 100827 / IM2).